Here is a 410-residue protein sequence, read N- to C-terminus: Meiotic driver wtf18 (410 aa).

The tract at residues 1 to 39 (MKNKGYPLRSSMDELSTKNDNEIDLEKGPLPEYNSEDGS) is disordered. The segment covering 11 to 29 (SMDELSTKNDNEIDLEKGP) has biased composition (basic and acidic residues). Helical transmembrane passes span 89-109 (LLIS…CVNP), 119-139 (AFFV…FCFF), 149-169 (CIKV…VFLA), 174-194 (VTAV…AKCI), 204-224 (CVKV…VGLY), 229-249 (DLVV…FGCV), 265-285 (CSIS…IWTL), 289-309 (LFGL…TKGL), 319-339 (ATGY…LFFY), and 353-373 (FIGN…GGIG).

This sequence belongs to the WTF family. As to quaternary structure, homomer. Forms protein aggregates. The two isoforms can interact with each other and with themselves. High sequence similarity is required for their interaction.

It localises to the spore membrane. Its subcellular location is the vacuole membrane. The protein localises to the ascus epiplasm. The protein resides in the cytoplasm. It is found in the endoplasmic reticulum membrane. Promotes unequal transmission of alleles from the parental zygote to progeny spores by acting as poison/antidote system where the poison and antidote proteins are produced from the same locus; the poison component is trans-acting and targets all spores within an ascus whereas the antidote component is spore-specific, leading to poisoning of all progeny that do not inherit the allele. Its function is as follows. Localizes isoform 2 to the vacuole thereby facilitating its degradation. In addition to suppressing isoform 2, also suppresses S.pombe strain 972 wtf13 isoform 2. In terms of biological role, forms toxic aggregates that disrupt spore maturation. The protein is Meiotic driver wtf18 of Schizosaccharomyces pombe (Fission yeast).